Consider the following 193-residue polypeptide: dTTP/UTP pyrophosphatase (193 aa).

Asp-71 (proton acceptor) is an active-site residue.

Belongs to the Maf family. YhdE subfamily. The cofactor is a divalent metal cation.

It localises to the cytoplasm. The catalysed reaction is dTTP + H2O = dTMP + diphosphate + H(+). It carries out the reaction UTP + H2O = UMP + diphosphate + H(+). Nucleoside triphosphate pyrophosphatase that hydrolyzes dTTP and UTP. May have a dual role in cell division arrest and in preventing the incorporation of modified nucleotides into cellular nucleic acids. In Dictyoglomus thermophilum (strain ATCC 35947 / DSM 3960 / H-6-12), this protein is dTTP/UTP pyrophosphatase.